We begin with the raw amino-acid sequence, 114 residues long: MTKSHCRNKLIQLFLDYGCEFRSYLKKFDVSHIKIIRIIDCYRNYFKTINNELRDVQTEIIYKPDSLRSNIFKIQWEIHNGLSYDVIKKHNQKLFDYFGIQDEEKLIRIIGLVE.

This is an uncharacterized protein from Acanthamoeba polyphaga mimivirus (APMV).